Reading from the N-terminus, the 387-residue chain is Dual specificity protein phosphatase MPK-4 (387 aa).

A compositionally biased stretch (polar residues) spans 1 to 15 (MEQSQSQRQAWPSSS). The disordered stretch occupies residues 1–27 (MEQSQSQRQAWPSSSAGGGKAQDSGVL). Residues 35–182 (GPVSIDEVDT…LKLFRRMGCK (148 aa)) enclose the Tyrosine-protein phosphatase domain. The active-site Phosphocysteine intermediate is Cys-126. The disordered stretch occupies residues 248–267 (LEHKPRDRPPQEVVPKEKEE).

Belongs to the protein-tyrosine phosphatase family. Non-receptor class dual specificity subfamily. Interacts (via tyrosine-protein phosphatase domain) with bsk/JNK; the interaction dephosphorylates bsk.

The protein localises to the nucleus. Its subcellular location is the cytoplasm. The enzyme catalyses O-phospho-L-tyrosyl-[protein] + H2O = L-tyrosyl-[protein] + phosphate. It catalyses the reaction O-phospho-L-seryl-[protein] + H2O = L-seryl-[protein] + phosphate. It carries out the reaction O-phospho-L-threonyl-[protein] + H2O = L-threonyl-[protein] + phosphate. With respect to regulation, inhibited by the tyrosine phosphatase inhibitor sodium vanadate. Dual specificity phosphatase; can dephosphorylate both phosphotyrosine and phosphoserine or phosphothreonine residues. May suppress bsk/JNK activation during the immune response. This is Dual specificity protein phosphatase MPK-4 from Drosophila melanogaster (Fruit fly).